Here is a 132-residue protein sequence, read N- to C-terminus: Small ribosomal subunit protein uS8 (132 aa).

Belongs to the universal ribosomal protein uS8 family. In terms of assembly, part of the 30S ribosomal subunit. Contacts proteins S5 and S12.

Functionally, one of the primary rRNA binding proteins, it binds directly to 16S rRNA central domain where it helps coordinate assembly of the platform of the 30S subunit. The chain is Small ribosomal subunit protein uS8 from Leuconostoc citreum (strain KM20).